Here is a 227-residue protein sequence, read N- to C-terminus: Orotate phosphoribosyltransferase (227 aa).

5-phospho-alpha-D-ribose 1-diphosphate is bound at residue Lys26. Residue 34 to 35 coordinates orotate; it reads FF. 5-phospho-alpha-D-ribose 1-diphosphate is bound by residues 72–73, Arg98, Lys99, Lys102, His104, and 123–131; these read YK and DDVVSAGLS. Orotate is bound by residues Ser127 and Arg155.

This sequence belongs to the purine/pyrimidine phosphoribosyltransferase family. PyrE subfamily. As to quaternary structure, homodimer. Mg(2+) serves as cofactor.

The enzyme catalyses orotidine 5'-phosphate + diphosphate = orotate + 5-phospho-alpha-D-ribose 1-diphosphate. It participates in pyrimidine metabolism; UMP biosynthesis via de novo pathway; UMP from orotate: step 1/2. Catalyzes the transfer of a ribosyl phosphate group from 5-phosphoribose 1-diphosphate to orotate, leading to the formation of orotidine monophosphate (OMP). The sequence is that of Orotate phosphoribosyltransferase from Nitrosomonas europaea (strain ATCC 19718 / CIP 103999 / KCTC 2705 / NBRC 14298).